We begin with the raw amino-acid sequence, 436 residues long: Probable cinnamyl alcohol dehydrogenase 8B (436 aa).

Position 120 (Cys120) interacts with Zn(2+). Thr122 is an NADP(+) binding site. 7 residues coordinate Zn(2+): His142, Glu143, Cys173, Cys176, Cys179, Cys187, and Cys236. NADP(+) is bound by residues Thr240, 261–266 (GLGGLG), 284–289 (STSPGK), Thr324, Gly348, and 371–373 (NCV).

This sequence belongs to the zinc-containing alcohol dehydrogenase family. In terms of assembly, homodimer. Zn(2+) serves as cofactor.

It catalyses the reaction (E)-cinnamyl alcohol + NADP(+) = (E)-cinnamaldehyde + NADPH + H(+). The catalysed reaction is (E)-coniferol + NADP(+) = (E)-coniferaldehyde + NADPH + H(+). The enzyme catalyses (E)-sinapyl alcohol + NADP(+) = (E)-sinapaldehyde + NADPH + H(+). It carries out the reaction (E)-4-coumaroyl alcohol + NADP(+) = (E)-4-coumaraldehyde + NADPH + H(+). It catalyses the reaction (E)-caffeyl alcohol + NADP(+) = (E)-caffeyl aldehyde + NADPH + H(+). It functions in the pathway aromatic compound metabolism; phenylpropanoid biosynthesis. Functionally, involved in lignin biosynthesis. Catalyzes the final step specific for the production of lignin monomers. Catalyzes the NADPH-dependent reduction of coniferaldehyde, 5-hydroxyconiferaldehyde, sinapaldehyde, 4-coumaraldehyde and caffeyl aldehyde to their respective alcohols. This is Probable cinnamyl alcohol dehydrogenase 8B from Oryza sativa subsp. japonica (Rice).